The sequence spans 284 residues: Bifunctional protein FolD (284 aa).

NADP(+)-binding positions include 165 to 167 (GRS) and Ser-190.

It belongs to the tetrahydrofolate dehydrogenase/cyclohydrolase family. Homodimer.

The catalysed reaction is (6R)-5,10-methylene-5,6,7,8-tetrahydrofolate + NADP(+) = (6R)-5,10-methenyltetrahydrofolate + NADPH. The enzyme catalyses (6R)-5,10-methenyltetrahydrofolate + H2O = (6R)-10-formyltetrahydrofolate + H(+). The protein operates within one-carbon metabolism; tetrahydrofolate interconversion. Functionally, catalyzes the oxidation of 5,10-methylenetetrahydrofolate to 5,10-methenyltetrahydrofolate and then the hydrolysis of 5,10-methenyltetrahydrofolate to 10-formyltetrahydrofolate. This Streptococcus equi subsp. zooepidemicus (strain MGCS10565) protein is Bifunctional protein FolD.